The following is a 439-amino-acid chain: Xylose isomerase (439 aa).

Residues H99 and D102 contribute to the active site. The Mg(2+) site is built by E230, E266, H269, D294, D305, D307, and D337.

This sequence belongs to the xylose isomerase family. As to quaternary structure, homotetramer. Requires Mg(2+) as cofactor.

Its subcellular location is the cytoplasm. It carries out the reaction alpha-D-xylose = alpha-D-xylulofuranose. The chain is Xylose isomerase from Shouchella clausii (strain KSM-K16) (Alkalihalobacillus clausii).